We begin with the raw amino-acid sequence, 778 residues long: Ral guanine nucleotide dissociation stimulator-like 2 (778 aa).

A compositionally biased stretch (low complexity) spans 1 to 15 (MLPRPLRLLLDTTPP). Residues 1 to 59 (MLPRPLRLLLDTTPPGGVVLSSFRSRDPEEGGDPGGRAVGGGQEEEDEEEEEASVSVWD) are disordered. A compositionally biased stretch (gly residues) spans 33–42 (DPGGRAVGGG). Residues 43-59 (QEEEDEEEEEASVSVWD) are compositionally biased toward acidic residues. In terms of domain architecture, N-terminal Ras-GEF spans 88-212 (SSRRLRAGTL…GSADLIRNLR (125 aa)). A Ras-GEF domain is found at 243–513 (LADHLAEQLT…HRVSCEVEPP (271 aa)). 4 disordered regions span residues 503-524 (SHRVSCEVEPPGTSDSPAARTP), 541-564 (GGPTPLVSWDRPSVGGDEVPGTPA), 581-647 (SLDS…GPGS), and 735-769 (RRPSAATPGSHSGPSASGTPPSEGGGGSFPRIKAT). A compositionally biased stretch (low complexity) spans 581 to 592 (SLDSALESSPSL). The span at 620–632 (CGSPLSGNTGEGT) shows a compositional bias: polar residues. Residues 649 to 736 (DCRIIRVQME…HDFLLRQRRR (88 aa)) form the Ras-associating domain. Low complexity predominate over residues 738 to 756 (SAATPGSHSGPSASGTPPS).

In terms of assembly, interacts with SAMD9.

Its function is as follows. Probable guanine nucleotide exchange factor. Putative effector of Ras and/or Rap. Associates with the GTP-bound form of Rap 1A and H-Ras in vitro. This chain is Ral guanine nucleotide dissociation stimulator-like 2 (Rgl2), found in Mus musculus (Mouse).